Here is a 446-residue protein sequence, read N- to C-terminus: RUN domain-containing protein 3A (446 aa).

The interaction with RAP2A stretch occupies residues 1-298 (METSFVQTTM…LQLQLEEAAA (298 aa)). The RUN domain occupies 52–189 (DDSSEEFVNF…IDFSFCLKGE (138 aa)). Residue Thr215 is modified to Phosphothreonine. A disordered region spans residues 216–239 (DEEERHSAESSTSEDNSPEHPYLP). Ser232 carries the phosphoserine modification. The stretch at 267-322 (YLEELVRLRESQLKDLEAENRRLQLQLEEAAAQNQREKRELEGVILELQEQLTGLI) forms a coiled coil. Over residues 372–384 (PLSAEASLSSDSQ) the composition is skewed to polar residues. Residues 372-404 (PLSAEASLSSDSQRLGEGTRDEEPWGPIGKDPT) form a disordered region. Phosphoserine occurs at positions 416 and 419.

It belongs to the RUNDC3 family. In terms of assembly, interacts with the GTP-bound form of RAP2A.

Functionally, may act as an effector of RAP2A in neuronal cells. The protein is RUN domain-containing protein 3A (RUNDC3A) of Pongo abelii (Sumatran orangutan).